Reading from the N-terminus, the 152-residue chain is Small ribosomal subunit protein uS15 (152 aa).

Basic residues predominate over residues 1–19 (MAKMHTRRKGRSRSTRPVR). The disordered stretch occupies residues 1–21 (MAKMHTRRKGRSRSTRPVRKT).

It belongs to the universal ribosomal protein uS15 family. In terms of assembly, part of the 30S ribosomal subunit.

The chain is Small ribosomal subunit protein uS15 from Methanocella arvoryzae (strain DSM 22066 / NBRC 105507 / MRE50).